A 424-amino-acid polypeptide reads, in one-letter code: Enolase (424 aa).

Residue Q165 coordinates (2R)-2-phosphoglycerate. E207 functions as the Proton donor in the catalytic mechanism. 3 residues coordinate Mg(2+): D244, E283, and D310. (2R)-2-phosphoglycerate contacts are provided by K335, R364, S365, and K386. K335 acts as the Proton acceptor in catalysis.

Belongs to the enolase family. Mg(2+) serves as cofactor.

Its subcellular location is the cytoplasm. The protein resides in the secreted. It localises to the cell surface. It carries out the reaction (2R)-2-phosphoglycerate = phosphoenolpyruvate + H2O. It participates in carbohydrate degradation; glycolysis; pyruvate from D-glyceraldehyde 3-phosphate: step 4/5. Functionally, catalyzes the reversible conversion of 2-phosphoglycerate (2-PG) into phosphoenolpyruvate (PEP). It is essential for the degradation of carbohydrates via glycolysis. This is Enolase from Chlamydia felis (strain Fe/C-56) (Chlamydophila felis).